Here is a 367-residue protein sequence, read N- to C-terminus: Pantothenate kinase CAB1 (367 aa).

Belongs to the type II pantothenate kinase family.

It localises to the cytoplasm. The protein resides in the nucleus. It carries out the reaction (R)-pantothenate + ATP = (R)-4'-phosphopantothenate + ADP + H(+). It functions in the pathway cofactor biosynthesis; coenzyme A biosynthesis; CoA from (R)-pantothenate: step 1/5. Its activity is regulated as follows. Regulated by feedback inhibition by malonyl-CoA. In terms of biological role, plays a role in the physiological regulation of the intracellular CoA concentration. The protein is Pantothenate kinase CAB1 (CAB1) of Saccharomyces cerevisiae (strain ATCC 204508 / S288c) (Baker's yeast).